The following is a 510-amino-acid chain: Histidine ammonia-lyase (510 aa).

The 5-imidazolinone (Ala-Gly) cross-link spans 144–146 (ASG). Ser145 is modified (2,3-didehydroalanine (Ser)).

Belongs to the PAL/histidase family. Post-translationally, contains an active site 4-methylidene-imidazol-5-one (MIO), which is formed autocatalytically by cyclization and dehydration of residues Ala-Ser-Gly.

It localises to the cytoplasm. The catalysed reaction is L-histidine = trans-urocanate + NH4(+). It functions in the pathway amino-acid degradation; L-histidine degradation into L-glutamate; N-formimidoyl-L-glutamate from L-histidine: step 1/3. This chain is Histidine ammonia-lyase, found in Chromobacterium violaceum (strain ATCC 12472 / DSM 30191 / JCM 1249 / CCUG 213 / NBRC 12614 / NCIMB 9131 / NCTC 9757 / MK).